Here is a 249-residue protein sequence, read N- to C-terminus: DNA repair protein RecO (249 aa).

Belongs to the RecO family.

Its function is as follows. Involved in DNA repair and RecF pathway recombination. This Mycoplasma capricolum subsp. capricolum (strain California kid / ATCC 27343 / NCTC 10154) protein is DNA repair protein RecO.